The primary structure comprises 291 residues: Malolactic fermentation system transcriptional activator (291 aa).

Residues 1 to 60 (MSLNLRDLEYFYQLSKLRSFTNVAKHFRVSQPTISYAIKRLETYYDCDLFYKDSSHQVVD) form the HTH lysR-type domain. The segment at residues 20-39 (FTNVAKHFRVSQPTISYAIK) is a DNA-binding region (H-T-H motif).

The protein belongs to the LysR transcriptional regulatory family.

It localises to the cytoplasm. Functionally, required for malolactic fermentation. It is most probably a transcriptional activator. The protein is Malolactic fermentation system transcriptional activator (mleR) of Lactococcus lactis subsp. lactis (strain IL1403) (Streptococcus lactis).